We begin with the raw amino-acid sequence, 323 residues long: NADH-ubiquinone oxidoreductase chain 1 (323 aa).

A run of 8 helical transmembrane segments spans residues 8 to 28, 75 to 95, 105 to 125, 151 to 171, 177 to 197, 234 to 254, 258 to 278, and 298 to 318; these read LINP…LTLI, MFLI…APLP, LGIL…LGSG, LGLI…TTLM, MWLI…TLAE, ANIL…SSFM, ELTT…FLWV, and FLPI…SMLG.

It belongs to the complex I subunit 1 family. Core subunit of respiratory chain NADH dehydrogenase (Complex I) which is composed of 45 different subunits.

It localises to the mitochondrion inner membrane. It catalyses the reaction a ubiquinone + NADH + 5 H(+)(in) = a ubiquinol + NAD(+) + 4 H(+)(out). Its function is as follows. Core subunit of the mitochondrial membrane respiratory chain NADH dehydrogenase (Complex I) which catalyzes electron transfer from NADH through the respiratory chain, using ubiquinone as an electron acceptor. Essential for the catalytic activity and assembly of complex I. This is NADH-ubiquinone oxidoreductase chain 1 (mt-nd1) from Xenopus laevis (African clawed frog).